The sequence spans 181 residues: MNPETLKFIEASIKTIPDYPKPGILFRDITSLIENAEAFKATIDLLAEHYRDQGITKIVGTEARGFIFGAPVAFAMGLGFVPVRKPGKLPRAVIEESYALEYGTDTLQLHTDAIVPGDKVLVVDDLLATGGTVDATVKLIRRAGGEVADAAFIISLPSLGGDARLTAAGIKVVSLVELAGE.

The protein belongs to the purine/pyrimidine phosphoribosyltransferase family. In terms of assembly, homodimer.

The protein localises to the cytoplasm. The enzyme catalyses AMP + diphosphate = 5-phospho-alpha-D-ribose 1-diphosphate + adenine. It functions in the pathway purine metabolism; AMP biosynthesis via salvage pathway; AMP from adenine: step 1/1. Functionally, catalyzes a salvage reaction resulting in the formation of AMP, that is energically less costly than de novo synthesis. The sequence is that of Adenine phosphoribosyltransferase from Aeromonas salmonicida (strain A449).